We begin with the raw amino-acid sequence, 103 residues long: Small ribosomal subunit protein bS6c (103 aa).

The protein belongs to the bacterial ribosomal protein bS6 family.

The protein resides in the plastid. It is found in the chloroplast. Binds together with bS18 to 16S ribosomal RNA. This chain is Small ribosomal subunit protein bS6c (rps6), found in Cyanidium caldarium (Red alga).